The chain runs to 466 residues: Gamma-glutamylpolyamine synthetase GlnA3 (466 aa).

Positions 127 to 466 constitute a GS catalytic domain; the sequence is GRTVLRRIVA…GVAAAYRWKY (340 aa). Mg(2+) is bound by residues Glu151 and Glu153. Glu202 serves as a coordination point for ATP. 2 residues coordinate Mg(2+): Glu207 and Glu214. An L-glutamate-binding site is contributed by Gly259. Position 263 (His263) interacts with Mg(2+). Ser267 is an ATP binding site. Positions 316 and 334 each coordinate L-glutamate. Residues Arg334 and Arg339 each contribute to the ATP site. Residue Glu355 participates in Mg(2+) binding.

This sequence belongs to the glutamine synthetase family. The cofactor is Mg(2+). In terms of tissue distribution, expressed in mycelium.

It carries out the reaction spermine + L-glutamate + ATP = gamma-L-glutamylspermine + ADP + phosphate + H(+). The enzyme catalyses spermidine + L-glutamate + ATP = gamma-L-glutamylspermidine + ADP + phosphate + H(+). It catalyses the reaction putrescine + L-glutamate + ATP = gamma-L-glutamylputrescine + ADP + phosphate + H(+). The catalysed reaction is cadaverine + L-glutamate + ATP = gamma-L-glutamylcadaverine + ADP + phosphate + H(+). The protein operates within amine and polyamine degradation; putrescine degradation. Its pathway is amine and polyamine degradation; spermidine degradation. It participates in amine and polyamine degradation; spermine degradation. In terms of biological role, involved in the catabolism of polyamines. Catalyzes the ATP-dependent gamma-glutamylation of polyamines. Substrates include putrescine, cadaverine, spermidine and spermine, with a preference for long-chain polyamines spermidine and spermine. Is not able to compensate for the loss of glutamine synthetases (GSs). No complementation of the L-glutamine auxotrophy of an E.coli glnA mutant. Involved in morphological differentiation and in the production of secondary metabolites. Together with GlnA2, enables survival of S.coelicolor under exposure to high local environmental polyamine concentrations, which is toxic to the cells. This Streptomyces coelicolor (strain ATCC BAA-471 / A3(2) / M145) protein is Gamma-glutamylpolyamine synthetase GlnA3.